The chain runs to 531 residues: Transcription termination/antitermination protein NusA (531 aa).

An S1 motif domain is found at Gly165–Ser235. Residues Asp340–Ile410 enclose the KH domain. The span at Glu463–Gln475 shows a compositional bias: basic and acidic residues. The disordered stretch occupies residues Glu463–Leu531. Basic residues predominate over residues Pro476 to Ala490. The segment covering Ala502–Val512 has biased composition (basic and acidic residues). The segment covering Asp513–Leu531 has biased composition (polar residues).

It belongs to the NusA family. Monomer. Binds directly to the core enzyme of the DNA-dependent RNA polymerase and to nascent RNA.

The protein localises to the cytoplasm. In terms of biological role, participates in both transcription termination and antitermination. This Mycoplasma genitalium (strain ATCC 33530 / DSM 19775 / NCTC 10195 / G37) (Mycoplasmoides genitalium) protein is Transcription termination/antitermination protein NusA.